The primary structure comprises 433 residues: Ornithine decarboxylase 1B, chloroplastic (433 aa).

Lys-96 is subject to N6-(pyridoxal phosphate)lysine. Pyridoxal 5'-phosphate-binding positions include Ser-228, Gly-266, and 299 to 302; that span reads EPGR. 342–343 is a binding site for substrate; that stretch reads YD. The active-site Proton donor; shared with dimeric partner is the Cys-378. A substrate-binding site is contributed by Asp-379. Tyr-407 is a binding site for pyridoxal 5'-phosphate.

The protein belongs to the Orn/Lys/Arg decarboxylase class-II family. Homodimer. Only the dimer is catalytically active, as the active sites are constructed of residues from both monomers. Requires pyridoxal 5'-phosphate as cofactor.

The protein resides in the plastid. It localises to the chloroplast. It catalyses the reaction L-ornithine + H(+) = putrescine + CO2. The protein operates within alkaloid biosynthesis; nicotine biosynthesis. It participates in amine and polyamine biosynthesis; putrescine biosynthesis via L-ornithine pathway; putrescine from L-ornithine: step 1/1. Functionally, involved in the biosynthesis of pyridine alkaloid natural products, leading mainly to the production of anabasine, anatabine, nicotine and nornicotine, effective deterrents against herbivores with antiparasitic and pesticide properties (neurotoxins); nornicotine serves as the precursor in the synthesis of the carcinogen compound N'-nitrosonornicotine (NNN). Catalyzes the first and rate-limiting step of polyamine biosynthesis that converts ornithine into putrescine, which is the precursor for the polyamines, spermidine and spermine. Polyamines are essential for cell proliferation and are implicated in cellular processes, ranging from DNA replication to apoptosis. In Nicotiana tabacum (Common tobacco), this protein is Ornithine decarboxylase 1B, chloroplastic.